We begin with the raw amino-acid sequence, 189 residues long: Protein jagunal homolog (189 aa).

The Cytoplasmic segment spans residues 1-34 (MSSRGVRAAGTDGTDFQNRQRVAQHYQESAQYKS). A helical membrane pass occupies residues 35–55 (ILKWFFVPHFLILVFMWLKVG). The Lumenal portion of the chain corresponds to 56-78 (SELLRTNFGWKNAFFDRLDMPSA). The chain crosses the membrane as a helical span at residues 79-99 (YPWEYVWCFSFIPIVLAIYSF). The Cytoplasmic segment spans residues 100–105 (QRNKLK). Residues 106-126 (ILHYAYYAEFVVGIFPCMIGL) traverse the membrane as a helical segment. Residues 127 to 150 (GGQLPELMEYAQDMEGSNTPTFKG) are Lumenal-facing. A helical membrane pass occupies residues 151–171 (IFPMVIIWYIFFAVALQIHGF). Residues 172 to 189 (SMYFMHHLAAAWAPVKRD) lie on the Cytoplasmic side of the membrane.

Belongs to the jagunal family.

Its subcellular location is the endoplasmic reticulum membrane. The chain is Protein jagunal homolog from Caenorhabditis elegans.